The primary structure comprises 270 residues: Formamidopyrimidine-DNA glycosylase (270 aa).

Catalysis depends on proline 2, which acts as the Schiff-base intermediate with DNA. Catalysis depends on glutamate 3, which acts as the Proton donor. Lysine 58 functions as the Proton donor; for beta-elimination activity in the catalytic mechanism. 3 residues coordinate DNA: histidine 90, arginine 109, and arginine 152. The FPG-type zinc finger occupies 237-270 (RVYGREGEPCHCGTVIRRRVDGGRSTFYCPKCQK). The Proton donor; for delta-elimination activity role is filled by arginine 260.

This sequence belongs to the FPG family. In terms of assembly, monomer. Zn(2+) is required as a cofactor.

The enzyme catalyses Hydrolysis of DNA containing ring-opened 7-methylguanine residues, releasing 2,6-diamino-4-hydroxy-5-(N-methyl)formamidopyrimidine.. The catalysed reaction is 2'-deoxyribonucleotide-(2'-deoxyribose 5'-phosphate)-2'-deoxyribonucleotide-DNA = a 3'-end 2'-deoxyribonucleotide-(2,3-dehydro-2,3-deoxyribose 5'-phosphate)-DNA + a 5'-end 5'-phospho-2'-deoxyribonucleoside-DNA + H(+). Involved in base excision repair of DNA damaged by oxidation or by mutagenic agents. Acts as a DNA glycosylase that recognizes and removes damaged bases. Has a preference for oxidized purines, such as 7,8-dihydro-8-oxoguanine (8-oxoG). Has AP (apurinic/apyrimidinic) lyase activity and introduces nicks in the DNA strand. Cleaves the DNA backbone by beta-delta elimination to generate a single-strand break at the site of the removed base with both 3'- and 5'-phosphates. This is Formamidopyrimidine-DNA glycosylase from Rhizorhabdus wittichii (strain DSM 6014 / CCUG 31198 / JCM 15750 / NBRC 105917 / EY 4224 / RW1) (Sphingomonas wittichii).